The chain runs to 155 residues: UPF0178 protein Clos_2709 (155 aa).

It belongs to the UPF0178 family.

This is UPF0178 protein Clos_2709 from Alkaliphilus oremlandii (strain OhILAs) (Clostridium oremlandii (strain OhILAs)).